The following is a 228-amino-acid chain: Translation initiation factor 6 (228 aa).

In terms of biological role, binds to the 50S ribosomal subunit and prevents its association with the 30S ribosomal subunit to form the 70S initiation complex. The protein is Translation initiation factor 6 of Methanocaldococcus jannaschii (strain ATCC 43067 / DSM 2661 / JAL-1 / JCM 10045 / NBRC 100440) (Methanococcus jannaschii).